The primary structure comprises 355 residues: Class E basic helix-loop-helix protein 22 (355 aa).

2 disordered regions span residues 34-90 (AFRS…GGGG) and 128-215 (GRGS…KEQK). Composition is skewed to gly residues over residues 81–90 (GGGGASGGGG) and 185–207 (GGSG…GGGS). The bHLH domain maps to 216 to 270 (ALRLNINARERRRMHDLNDALDELRAVIPYAHSPSVRKLSKIATLLLAKNYILMQ).

As to quaternary structure, interacts with PRDM8. Brain-specific, with the highest expression in the cerebellum.

It is found in the nucleus. Its function is as follows. Inhibits DNA binding of TCF3/E47 homodimers and TCF3 (E47)/NEUROD1 heterodimers and acts as a strong repressor of Neurod1 and Myod-responsive genes, probably by heterodimerization with class a basic helix-loop-helix factors. Despite the presence of an intact basic domain, does not bind to DNA. In the brain, may function as an area-specific transcription factor that regulates the postmitotic acquisition of area identities and elucidate the genetic hierarchy between progenitors and postmitotic neurons driving neocortical arealization. May be required for the survival of a specific population of inhibitory neurons in the superficial laminae of the spinal cord dorsal horn that may regulate pruritis. Seems to play a crucial role in the retinogenesis, in the specification of amacrine and bipolar subtypes. Forms with PRDM8 a transcriptional repressor complex controlling genes involved in neural development and neuronal differentiation. The protein is Class E basic helix-loop-helix protein 22 (Bhlhe22) of Mus musculus (Mouse).